A 623-amino-acid chain; its full sequence is Fanconi anemia group G protein homolog (623 aa).

TPR repeat units lie at residues 251–284 (VQVYTALGACLRKMGNPQRALLYLTEALKVGTTC), 349–382 (SQAKHLLASRCLQTGRAEDAAEHYLDLLAMLLGG), 458–491 (SATHLLQGQAWSQLKAQKEALSEFSQCLELLFRT), and 517–550 (VAALISRGLEWVASGQDTKALSDFLLSVQICPGN).

Belongs to the multisubunit FA complex composed of FANCA, FANCB, FANCC, FANCE, FANCF, FANCG, FANCL/PHF9 and FANCM. In complex with FANCF, FANCA and FANCL, but not with FANCC, nor FANCE, interacts with HES1; this interaction may be essential for the stability and nuclear localization of FA core complex proteins. The complex with FANCC and FANCG may also include EIF2AK2 and HSP70. As to expression, highest expression levels in spleen, thymus and testis.

It localises to the nucleus. Functionally, DNA repair protein that may operate in a postreplication repair or a cell cycle checkpoint function. May be implicated in interstrand DNA cross-link repair and in the maintenance of normal chromosome stability. Candidate tumor suppressor gene. This chain is Fanconi anemia group G protein homolog (Fancg), found in Mus musculus (Mouse).